A 331-amino-acid chain; its full sequence is Holliday junction branch migration complex subunit RuvB (331 aa).

Residues 1–182 (MDDRMVDQAL…FGVHLRLEYY (182 aa)) form a large ATPase domain (RuvB-L) region. ATP is bound by residues Leu-21, Arg-22, Gly-63, Lys-66, Thr-67, Thr-68, 129 to 131 (EDF), Arg-172, Tyr-182, and Arg-219. Thr-67 contacts Mg(2+). The segment at 183–253 (NENDLKEIII…TTKQALQLLQ (71 aa)) is small ATPAse domain (RuvB-S). The interval 256–331 (AEGLDYIDHK…AYEHFKNFNK (76 aa)) is head domain (RuvB-H). Residues Arg-292, Arg-311, and Arg-316 each contribute to the DNA site.

This sequence belongs to the RuvB family. In terms of assembly, homohexamer. Forms an RuvA(8)-RuvB(12)-Holliday junction (HJ) complex. HJ DNA is sandwiched between 2 RuvA tetramers; dsDNA enters through RuvA and exits via RuvB. An RuvB hexamer assembles on each DNA strand where it exits the tetramer. Each RuvB hexamer is contacted by two RuvA subunits (via domain III) on 2 adjacent RuvB subunits; this complex drives branch migration. In the full resolvosome a probable DNA-RuvA(4)-RuvB(12)-RuvC(2) complex forms which resolves the HJ.

It is found in the cytoplasm. It carries out the reaction ATP + H2O = ADP + phosphate + H(+). Functionally, the RuvA-RuvB-RuvC complex processes Holliday junction (HJ) DNA during genetic recombination and DNA repair, while the RuvA-RuvB complex plays an important role in the rescue of blocked DNA replication forks via replication fork reversal (RFR). RuvA specifically binds to HJ cruciform DNA, conferring on it an open structure. The RuvB hexamer acts as an ATP-dependent pump, pulling dsDNA into and through the RuvAB complex. RuvB forms 2 homohexamers on either side of HJ DNA bound by 1 or 2 RuvA tetramers; 4 subunits per hexamer contact DNA at a time. Coordinated motions by a converter formed by DNA-disengaged RuvB subunits stimulates ATP hydrolysis and nucleotide exchange. Immobilization of the converter enables RuvB to convert the ATP-contained energy into a lever motion, pulling 2 nucleotides of DNA out of the RuvA tetramer per ATP hydrolyzed, thus driving DNA branch migration. The RuvB motors rotate together with the DNA substrate, which together with the progressing nucleotide cycle form the mechanistic basis for DNA recombination by continuous HJ branch migration. Branch migration allows RuvC to scan DNA until it finds its consensus sequence, where it cleaves and resolves cruciform DNA. The protein is Holliday junction branch migration complex subunit RuvB of Staphylococcus haemolyticus (strain JCSC1435).